A 176-amino-acid chain; its full sequence is MTTATMDLKQHIRGIPDFPKPGILFYDISTLMRNADAWQVAMGRLTHAVAPWAPDMLAAIESRGFLTAAPLASNLGCGLVMLRKPGKLPGETVSHTYDLEYGSDTLHIQADAIRPGQRVVVMDDLLATGGTLAASVALLRKVGADVVGASVLVELRALGGRQRLDVPVQALISYDD.

Belongs to the purine/pyrimidine phosphoribosyltransferase family. In terms of assembly, homodimer.

The protein resides in the cytoplasm. The enzyme catalyses AMP + diphosphate = 5-phospho-alpha-D-ribose 1-diphosphate + adenine. The protein operates within purine metabolism; AMP biosynthesis via salvage pathway; AMP from adenine: step 1/1. Functionally, catalyzes a salvage reaction resulting in the formation of AMP, that is energically less costly than de novo synthesis. In Gluconacetobacter diazotrophicus (strain ATCC 49037 / DSM 5601 / CCUG 37298 / CIP 103539 / LMG 7603 / PAl5), this protein is Adenine phosphoribosyltransferase.